We begin with the raw amino-acid sequence, 896 residues long: Probable DNA-directed RNA polymerase (896 aa).

Active-site residues include aspartate 546, lysine 617, and aspartate 798.

This sequence belongs to the phage and mitochondrial RNA polymerase family.

It localises to the mitochondrion. It carries out the reaction RNA(n) + a ribonucleoside 5'-triphosphate = RNA(n+1) + diphosphate. Functionally, DNA-dependent RNA polymerase catalyzes the transcription of DNA into RNA using the four ribonucleoside triphosphates as substrates. This is Probable DNA-directed RNA polymerase from Neurospora crassa.